The primary structure comprises 349 residues: Protein POOR HOMOLOGOUS SYNAPSIS 1 (349 aa).

The protein localises to the cytoplasm. Its function is as follows. Required for accurate chromosome segregation in meiosis. Required for pairing to occur between homologous chromosomes. Acts in early recombination steps and ensures pairing fidelity and proper repair of meiotic DNA double-strand-breaks. Regulates recombination and pairing of homologous chromosomes during meiotic prophase by controlling transport of RAD50 from cytoplasm to the nucleus. May affect pairing of the gene-rich fraction of the genome rather than preventing pairing between repetitive DNA elements. This Arabidopsis thaliana (Mouse-ear cress) protein is Protein POOR HOMOLOGOUS SYNAPSIS 1.